A 347-amino-acid chain; its full sequence is Phosphoribosylformylglycinamidine cyclo-ligase (347 aa).

Belongs to the AIR synthase family.

The protein resides in the cytoplasm. The enzyme catalyses 2-formamido-N(1)-(5-O-phospho-beta-D-ribosyl)acetamidine + ATP = 5-amino-1-(5-phospho-beta-D-ribosyl)imidazole + ADP + phosphate + H(+). It functions in the pathway purine metabolism; IMP biosynthesis via de novo pathway; 5-amino-1-(5-phospho-D-ribosyl)imidazole from N(2)-formyl-N(1)-(5-phospho-D-ribosyl)glycinamide: step 2/2. The polypeptide is Phosphoribosylformylglycinamidine cyclo-ligase (Yersinia pseudotuberculosis serotype IB (strain PB1/+)).